Here is a 24-residue protein sequence, read N- to C-terminus: Outer membrane protein (24 aa).

This sequence belongs to the Gram-negative porin family. Homotrimer.

It is found in the cell outer membrane. Forms pores that allow passive diffusion of small molecules across the outer membrane. This Sodalis glossinidius protein is Outer membrane protein.